The primary structure comprises 95 residues: MKDPRDIIKRPIITENTMNLVGQRKYTFEVDVKANKTEVKDAVEKIFGVKVEKVNIMNYKGKFKRVGRYSGYTNRRRKAIVTLTPDSKEIELFEV.

The protein belongs to the universal ribosomal protein uL23 family. Part of the 50S ribosomal subunit. Contacts protein L29, and trigger factor when it is bound to the ribosome.

In terms of biological role, one of the early assembly proteins it binds 23S rRNA. One of the proteins that surrounds the polypeptide exit tunnel on the outside of the ribosome. Forms the main docking site for trigger factor binding to the ribosome. The sequence is that of Large ribosomal subunit protein uL23 from Geobacillus thermodenitrificans (strain NG80-2).